The chain runs to 1385 residues: Contactin-associated protein 1 (1385 aa).

The N-terminal stretch at 1 to 20 (MMSLRLFSILLATVVSGAWG) is a signal peptide. Residues 21–1284 (WGYYGCNEEL…PYYHDDGWIA (1264 aa)) are Extracellular-facing. In terms of domain architecture, F5/8 type C spans 26 to 169 (CNEELVGPLY…IGLRLGIYGC (144 aa)). A disulfide bond links Cys-26 and Cys-169. 3 N-linked (GlcNAc...) asparagine glycosylation sites follow: Asn-121, Asn-129, and Asn-277. 2 Laminin G-like domains span residues 204-356 (FKTE…AFRC) and 390-539 (FRTW…FDTC). A disulfide bond links Cys-324 and Cys-356. N-linked (GlcNAc...) asparagine glycosylation is found at Asn-421, Asn-500, and Asn-519. 4 disulfides stabilise this stretch: Cys-507–Cys-539, Cys-545–Cys-556, Cys-550–Cys-565, and Cys-567–Cys-577. The EGF-like 1 domain occupies 545 to 577 (CSPNMCEHDGRCYQSWDDFICYCELTGYKGVTC). Positions 577-796 (CHEPLYKESC…NTISFHTGAA (220 aa)) constitute a Fibrinogen C-terminal domain. 9 N-linked (GlcNAc...) asparagine glycosylation sites follow: Asn-598, Asn-654, Asn-665, Asn-764, Asn-805, Asn-844, Asn-861, Asn-949, and Asn-957. The Laminin G-like 3 domain maps to 814–958 (FRTSAPSGVF…NASEGTFPNC (145 aa)). Intrachain disulfides connect Cys-931-Cys-958, Cys-962-Cys-975, Cys-969-Cys-984, and Cys-986-Cys-996. The 35-residue stretch at 962-996 (CTHPRFPCFHGGRCVERYSYYTCDCDLTAFDGPYC) folds into the EGF-like 2 domain. Residues Asn-1079 and Asn-1148 are each glycosylated (N-linked (GlcNAc...) asparagine). One can recognise a Laminin G-like 4 domain in the interval 1089-1251 (FSTNSAPAVL…VQGELSESNC (163 aa)). Cys-1210 and Cys-1251 are disulfide-bonded. A helical transmembrane segment spans residues 1285–1305 (ILLGFLVAFLLLGLVGMLVLF). Residues 1306 to 1385 (YLQNHRYKGS…PQILEESRSE (80 aa)) lie on the Cytoplasmic side of the membrane. Residues 1317–1385 (HTNEPKATHD…PQILEESRSE (69 aa)) are disordered. Residues 1319–1329 (NEPKATHDSHP) show a composition bias toward basic and acidic residues. The span at 1334 to 1367 (PLPPSGPAQAPAPTPAPTQLPTPAPAPAPAPASG) shows a compositional bias: pro residues. An SH3-binding motif is present at residues 1334–1370 (PLPPSGPAQAPAPTPAPTQLPTPAPAPAPAPASGPGP). A Phosphoserine modification is found at Ser-1384.

This sequence belongs to the neurexin family. Interacts with CNTN1/contactin in cis form. In terms of tissue distribution, expressed in brain. In myelinated nerve fibers predominantly found in paranodal axoglial junctions. In the internodal region of myelinated axons in the CNS and the PNS also found as a thin line apposing the inner mesaxon of the myelin sheath. In PNS neurons this line forms a circumferential ring that apposes the innermost aspect of Schmidt-Lanterman incisures.

Its subcellular location is the membrane. It is found in the cell junction. The protein resides in the paranodal septate junction. Functionally, required, with CNTNAP2, for radial and longitudinal organization of myelinated axons. Plays a role in the formation of functional distinct domains critical for saltatory conduction of nerve impulses in myelinated nerve fibers. Demarcates the paranodal region of the axo-glial junction. In association with contactin involved in the signaling between axons and myelinating glial cells. The protein is Contactin-associated protein 1 (Cntnap1) of Mus musculus (Mouse).